A 235-amino-acid chain; its full sequence is Large ribosomal subunit protein uL4 (235 aa).

The segment at 45 to 75 (RAGTASTKTRGEVSGGGRKPWPQKHTGRARH) is disordered. Basic residues predominate over residues 65–75 (WPQKHTGRARH).

It belongs to the universal ribosomal protein uL4 family. Part of the 50S ribosomal subunit.

In terms of biological role, one of the primary rRNA binding proteins, this protein initially binds near the 5'-end of the 23S rRNA. It is important during the early stages of 50S assembly. It makes multiple contacts with different domains of the 23S rRNA in the assembled 50S subunit and ribosome. This protein only weakly controls expression of the E.coli S10 operon. It is incorporated into E.coli ribosomes, however it is not as firmly associated as the endogenous protein. Its function is as follows. Forms part of the polypeptide exit tunnel. This Thermotoga maritima (strain ATCC 43589 / DSM 3109 / JCM 10099 / NBRC 100826 / MSB8) protein is Large ribosomal subunit protein uL4 (rplD).